The primary structure comprises 358 residues: S-adenosylmethionine:tRNA ribosyltransferase-isomerase (358 aa).

This sequence belongs to the QueA family. In terms of assembly, monomer.

It is found in the cytoplasm. It carries out the reaction 7-aminomethyl-7-carbaguanosine(34) in tRNA + S-adenosyl-L-methionine = epoxyqueuosine(34) in tRNA + adenine + L-methionine + 2 H(+). It participates in tRNA modification; tRNA-queuosine biosynthesis. Its function is as follows. Transfers and isomerizes the ribose moiety from AdoMet to the 7-aminomethyl group of 7-deazaguanine (preQ1-tRNA) to give epoxyqueuosine (oQ-tRNA). The polypeptide is S-adenosylmethionine:tRNA ribosyltransferase-isomerase (Chelativorans sp. (strain BNC1)).